The primary structure comprises 107 residues: uncharacterized protein (107 aa).

Transmembrane regions (helical) follow at residues 11 to 31 (CVNF…ILCI) and 58 to 78 (LFFL…LAFQ).

It is found in the mitochondrion membrane. This is an uncharacterized protein from Saccharomyces cerevisiae (strain ATCC 204508 / S288c) (Baker's yeast).